The primary structure comprises 134 residues: Small ribosomal subunit protein uS12 (134 aa).

The interval 1–26 (MPTTQQLLRKGRTTLQKKSKVPALKG) is disordered. Positions 9-20 (RKGRTTLQKKSK) are enriched in basic residues. At D89 the chain carries 3-methylthioaspartic acid. The interval 103-134 (DTQGVKDRNKSRSKYGTKKPKAGAAAAGAKKK) is disordered. The span at 113-123 (SRSKYGTKKPK) shows a compositional bias: basic residues. Residues 124-134 (AGAAAAGAKKK) are compositionally biased toward low complexity.

The protein belongs to the universal ribosomal protein uS12 family. In terms of assembly, part of the 30S ribosomal subunit. Contacts proteins S8 and S17. May interact with IF1 in the 30S initiation complex.

With S4 and S5 plays an important role in translational accuracy. Functionally, interacts with and stabilizes bases of the 16S rRNA that are involved in tRNA selection in the A site and with the mRNA backbone. Located at the interface of the 30S and 50S subunits, it traverses the body of the 30S subunit contacting proteins on the other side and probably holding the rRNA structure together. The combined cluster of proteins S8, S12 and S17 appears to hold together the shoulder and platform of the 30S subunit. In Deinococcus geothermalis (strain DSM 11300 / CIP 105573 / AG-3a), this protein is Small ribosomal subunit protein uS12.